The sequence spans 469 residues: Probable periplasmic serine endoprotease DegP-like (469 aa).

A signal peptide spans 1 to 25; that stretch reads MNRLLKQVCMVVVSSFMMASMLTHA. Catalysis depends on charge relay system residues His114, Asp144, and Ser217. Substrate contacts are provided by residues 215–217 and 272–276; these read GNS and LGVLI. PDZ domains are found at residues 261 to 352 and 358 to 458; these read LKSD…YRDG and SVTL…IRQG.

This sequence belongs to the peptidase S1C family.

It localises to the periplasm. It catalyses the reaction Acts on substrates that are at least partially unfolded. The cleavage site P1 residue is normally between a pair of hydrophobic residues, such as Val-|-Val.. In terms of biological role, might be efficient in the degradation of transiently denatured and unfolded proteins which accumulate in the periplasm following stress conditions. This Marinomonas sp. (strain MWYL1) protein is Probable periplasmic serine endoprotease DegP-like.